The sequence spans 384 residues: S-adenosylmethionine synthase (384 aa).

His-15 contributes to the ATP binding site. Position 17 (Asp-17) interacts with Mg(2+). Glu-43 contacts K(+). L-methionine is bound by residues Glu-56 and Gln-99. The segment at 99–109 (QSPDINQGVDR) is flexible loop. Residues 164–166 (DAK), 230–231 (RF), Asp-239, 245–246 (RK), Ala-262, and Lys-266 each bind ATP. Asp-239 provides a ligand contact to L-methionine. Lys-270 lines the L-methionine pocket.

Belongs to the AdoMet synthase family. In terms of assembly, homotetramer; dimer of dimers. The cofactor is Mg(2+). It depends on K(+) as a cofactor.

The protein localises to the cytoplasm. The catalysed reaction is L-methionine + ATP + H2O = S-adenosyl-L-methionine + phosphate + diphosphate. The protein operates within amino-acid biosynthesis; S-adenosyl-L-methionine biosynthesis; S-adenosyl-L-methionine from L-methionine: step 1/1. Functionally, catalyzes the formation of S-adenosylmethionine (AdoMet) from methionine and ATP. The overall synthetic reaction is composed of two sequential steps, AdoMet formation and the subsequent tripolyphosphate hydrolysis which occurs prior to release of AdoMet from the enzyme. The chain is S-adenosylmethionine synthase from Edwardsiella ictaluri (strain 93-146).